A 379-amino-acid chain; its full sequence is tRNA (guanine(26)-N(2))-dimethyltransferase (379 aa).

The segment at 1–26 (MECREITEGSTTFTAPVQDETTQFPP) is disordered. The Trm1 methyltransferase domain maps to 4 to 369 (REITEGSTTF…APLPLIEEKI (366 aa)). Residues 8 to 25 (EGSTTFTAPVQDETTQFP) are compositionally biased toward polar residues. S-adenosyl-L-methionine contacts are provided by Arg-41, Arg-66, Asp-82, Asp-108, and Ala-109. The Zn(2+) site is built by Cys-237, Cys-240, Cys-257, and Cys-260.

Belongs to the class I-like SAM-binding methyltransferase superfamily. Trm1 family.

The enzyme catalyses guanosine(26) in tRNA + 2 S-adenosyl-L-methionine = N(2)-dimethylguanosine(26) in tRNA + 2 S-adenosyl-L-homocysteine + 2 H(+). In terms of biological role, dimethylates a single guanine residue at position 26 of a number of tRNAs using S-adenosyl-L-methionine as donor of the methyl groups. The sequence is that of tRNA (guanine(26)-N(2))-dimethyltransferase from Methanocorpusculum labreanum (strain ATCC 43576 / DSM 4855 / Z).